The sequence spans 579 residues: Chromosomal replication initiator protein DnaA (579 aa).

Residues 1–71 are domain I, interacts with DnaA modulators; that stretch reads MQDFWQAAAA…TALACEYWET (71 aa). Residues 71 to 242 form a domain II region; it reads TQVSVHFVLD…QQSDTVHERS (172 aa). 2 disordered regions span residues 131–196 and 212–240; these read AGAQ…SAAH and EASA…TVHE. Low complexity predominate over residues 171-183; the sequence is SQSQQSAQGRGAA. The segment at 243–459 is domain III, AAA+ region; that stretch reads RLNPILTFDN…GALRKILAFS (217 aa). ATP contacts are provided by G287, G289, K290, and T291. The interval 460 to 579 is domain IV, binds dsDNA; sequence NFHGKDITID…LHVLEQTLKG (120 aa).

It belongs to the DnaA family. In terms of assembly, oligomerizes as a right-handed, spiral filament on DNA at oriC.

The protein localises to the cytoplasm. In terms of biological role, plays an essential role in the initiation and regulation of chromosomal replication. ATP-DnaA binds to the origin of replication (oriC) to initiate formation of the DNA replication initiation complex once per cell cycle. Binds the DnaA box (a 9 base pair repeat at the origin) and separates the double-stranded (ds)DNA. Forms a right-handed helical filament on oriC DNA; dsDNA binds to the exterior of the filament while single-stranded (ss)DNA is stabiized in the filament's interior. The ATP-DnaA-oriC complex binds and stabilizes one strand of the AT-rich DNA unwinding element (DUE), permitting loading of DNA polymerase. After initiation quickly degrades to an ADP-DnaA complex that is not apt for DNA replication. Binds acidic phospholipids. The chain is Chromosomal replication initiator protein DnaA from Cupriavidus metallidurans (strain ATCC 43123 / DSM 2839 / NBRC 102507 / CH34) (Ralstonia metallidurans).